A 445-amino-acid chain; its full sequence is 23S rRNA (uracil(1939)-C(5))-methyltransferase RlmD (445 aa).

The interval Met-1–Ser-21 is disordered. Residues Arg-5 to Glu-64 enclose the TRAM domain. Cys-77, Cys-83, Cys-86, and Cys-165 together coordinate [4Fe-4S] cluster. Gln-275, Phe-304, Asn-309, Glu-325, Asp-352, and Asp-373 together coordinate S-adenosyl-L-methionine. Catalysis depends on Cys-399, which acts as the Nucleophile.

The protein belongs to the class I-like SAM-binding methyltransferase superfamily. RNA M5U methyltransferase family. RlmD subfamily.

It carries out the reaction uridine(1939) in 23S rRNA + S-adenosyl-L-methionine = 5-methyluridine(1939) in 23S rRNA + S-adenosyl-L-homocysteine + H(+). Its function is as follows. Catalyzes the formation of 5-methyl-uridine at position 1939 (m5U1939) in 23S rRNA. The protein is 23S rRNA (uracil(1939)-C(5))-methyltransferase RlmD of Alcanivorax borkumensis (strain ATCC 700651 / DSM 11573 / NCIMB 13689 / SK2).